The primary structure comprises 73 residues: Large ribosomal subunit protein bL31 (73 aa).

Zn(2+) is bound by residues cysteine 16, cysteine 18, cysteine 38, and cysteine 41.

This sequence belongs to the bacterial ribosomal protein bL31 family. Type A subfamily. In terms of assembly, part of the 50S ribosomal subunit. Zn(2+) is required as a cofactor.

Functionally, binds the 23S rRNA. The sequence is that of Large ribosomal subunit protein bL31 from Vibrio vulnificus (strain YJ016).